Here is a 212-residue protein sequence, read N- to C-terminus: Uracil phosphoribosyltransferase (212 aa).

Residues Arg-78, Arg-103, and 130 to 138 contribute to the 5-phospho-alpha-D-ribose 1-diphosphate site; that span reads DPMLATGGS. Uracil is bound by residues Ile-193 and 198 to 200; that span reads GDA. Asp-199 provides a ligand contact to 5-phospho-alpha-D-ribose 1-diphosphate.

It belongs to the UPRTase family. It depends on Mg(2+) as a cofactor.

It catalyses the reaction UMP + diphosphate = 5-phospho-alpha-D-ribose 1-diphosphate + uracil. Its pathway is pyrimidine metabolism; UMP biosynthesis via salvage pathway; UMP from uracil: step 1/1. Its activity is regulated as follows. Allosterically activated by GTP. Functionally, catalyzes the conversion of uracil and 5-phospho-alpha-D-ribose 1-diphosphate (PRPP) to UMP and diphosphate. This chain is Uracil phosphoribosyltransferase, found in Stutzerimonas stutzeri (strain A1501) (Pseudomonas stutzeri).